A 348-amino-acid polypeptide reads, in one-letter code: Putative zinc metalloprotease HP_0258 (348 aa).

H16 is a binding site for Zn(2+). E17 is a catalytic residue. H20 lines the Zn(2+) pocket. The next 5 membrane-spanning stretches (helical) occupy residues 43–63 (CFFKLFGTQFALSLIPLGGYV), 93–113 (WILFGGAFFNFLFAILVYFFL), 247–267 (LIMGSSSVKELSGVVGIVGAL), 275–295 (MLLLFGAFLSINLGILNLLPI), and 324–344 (LWLAGVGFLVFIMFLGLFNDL). The region spanning 106–175 (AILVYFFLAL…GELVLEIERN (70 aa)) is the PDZ domain.

This sequence belongs to the peptidase M50B family. Requires Zn(2+) as cofactor.

The protein localises to the cell inner membrane. This is Putative zinc metalloprotease HP_0258 from Helicobacter pylori (strain ATCC 700392 / 26695) (Campylobacter pylori).